A 345-amino-acid polypeptide reads, in one-letter code: Ubiquitin-associated domain-containing protein 2 (345 aa).

A signal peptide spans 1 to 39; that stretch reads MFTSTGSSGLYKAPLSKSLLLVPSALSLLLTLLLPHCQK. The Extracellular segment spans residues 40–91; sequence FFVYDLHAVKHDLQIWRLICGRIICLDLKDAFCSGLLIYNFRIFERRYGSRK. The chain crosses the membrane as a helical span at residues 92-112; the sequence is FASFLLGSWVLSALFDFILVE. The Cytoplasmic segment spans residues 113–125; the sequence is AVQYSLGVTVASN. A helical membrane pass occupies residues 126 to 146; it reads LPSGFLAPVFALFVPFHCSIP. Over 147 to 163 the chain is Extracellular; it reads RVQVAQILGPLSITNKT. An N-linked (GlcNAc...) asparagine glycan is attached at Asn-161. A helical membrane pass occupies residues 164 to 184; that stretch reads LIYILGLQLFTSGSYIWIVAM. Over 185-345 the chain is Cytoplasmic; sequence SGLISGMCYD…NVATNFLLQH (161 aa). Residues 287–306 form a disordered region; that stretch reads NINYQDGPRSEQRASPPLEV. Residues 305-345 enclose the UBA domain; it reads EVSEEQVARLMEMGFSRGDALEALRASNNDLNVATNFLLQH.

Interacts with LMBR1L, FAF2, AMFR and VCP.

Its subcellular location is the endoplasmic reticulum membrane. In terms of biological role, restricts trafficking of FAF2 from the endoplasmic reticulum to lipid droplets. In association with LMBR1L and E3 ubiquitin-protein ligase AMFR, negatively regulates the canonical Wnt signaling pathway in the lymphocytes by promoting the ubiquitin-mediated degradation of CTNNB1 and Wnt receptors FZD6 and LRP6. The sequence is that of Ubiquitin-associated domain-containing protein 2 (Ubac2) from Mus musculus (Mouse).